A 678-amino-acid polypeptide reads, in one-letter code: Glycine--tRNA ligase beta subunit (678 aa).

It belongs to the class-II aminoacyl-tRNA synthetase family. As to quaternary structure, tetramer of two alpha and two beta subunits.

The protein localises to the cytoplasm. It catalyses the reaction tRNA(Gly) + glycine + ATP = glycyl-tRNA(Gly) + AMP + diphosphate. This chain is Glycine--tRNA ligase beta subunit, found in Streptococcus pneumoniae serotype 19F (strain G54).